We begin with the raw amino-acid sequence, 89 residues long: MRHIHLQVFGRVQGVGFRYFTQRIAMNYNIVGTVQNVDDYVEIYAQGDDADIERFIQGVIEGASPASNVTSHQLEELELNQKLSDFRSI.

An Acylphosphatase-like domain is found at 3-89; it reads HIHLQVFGRV…NQKLSDFRSI (87 aa). Residues R18 and N36 contribute to the active site.

This sequence belongs to the acylphosphatase family.

It carries out the reaction an acyl phosphate + H2O = a carboxylate + phosphate + H(+). The chain is Acylphosphatase (acyP) from Staphylococcus aureus (strain Mu3 / ATCC 700698).